Consider the following 956-residue polypeptide: Ubiquitin carboxyl-terminal hydrolase CYLD (956 aa).

Residues 106–593 form an interaction with TRIP region; it reads CEERFSLFKN…LEIMIGKKKG (488 aa). 2 consecutive CAP-Gly domains span residues 153–198 and 253–286; these read LAER…VFVA and DVLP…VQLC. Positions 309-353 are disordered; it reads SVTQERRPPKLAFMSRGVGDKGSSSHNKPKATGSTSDPGNRNRSE. The segment covering 330–349 has biased composition (polar residues); that stretch reads GSSSHNKPKATGSTSDPGNR. Ser-387 is subject to Phosphoserine. Positions 392-411 are disordered; it reads STDFDRSSPPLQPPPVNSLS. The interaction with TRAF2 stretch occupies residues 394-469; the sequence is DFDRSSPPLQ…LAMPPGNSHG (76 aa). Residues Ser-418 and Ser-422 each carry the phosphoserine modification. The segment at 470-684 is interaction with IKBKG/NEMO; sequence LEVGSLAEVK…FTSEEKDPEE (215 aa). One can recognise a CAP-Gly 3 domain in the interval 492–535; that stretch reads GQPPGLNEVLAGLELEDECAGCTDGTFRGTRYFTCALKKALFVK. In terms of domain architecture, USP spans 592–950; that stretch reads KGIQGHYNSC…DAYMCMYQSP (359 aa). Cys-601 functions as the Nucleophile in the catalytic mechanism. The segment at 781–833 is B-box; it reads LEDTPRQCRICGGLAMYECRECYDDPDISAGKIKQFCKTCNTQVHLHPKRLNH. Zn(2+)-binding residues include Cys-788, Cys-791, Cys-799, Cys-802, Cys-817, Cys-820, His-825, and His-833. Residue His-871 is the Proton acceptor of the active site.

Belongs to the peptidase C19 family. In terms of assembly, interacts (via CAP-Gly domain) with IKBKG/NEMO (via proline-rich C-terminal region). Interacts with TRAF2 and TRIP. Interacts with PLK1, DVL1, DVL3, MAVS, TBK1, IKKE and RIGI. Interacts (via CAP-Gly domain) with microtubules. Interacts with HDAC6 and BCL3. Interacts with MAP3K7. Identified in a complex with TRAF6 and SQSTM1. Interacts with OPTN and SQSTM1. Interacts with CEP350. Interacts with RNF31; the interaction is indirect and is mediated via SPATA2. Interacts with SPATA2 (via the PUB domain); the interaction is direct and recruits CYLD to the LUBAC complex, thereby regulating TNF-alpha-induced necroptosis. Post-translationally, phosphorylated on several serine residues by IKKA and/or IKKB in response to immune stimuli. Phosphorylation requires IKBKG. Phosphorylation abolishes TRAF2 deubiquitination, interferes with the activation of Jun kinases, and strongly reduces CD40-dependent gene activation by NF-kappa-B. In terms of processing, ubiquitinated. Polyubiquitinated in hepatocytes treated with palmitic acid. Ubiquitination is mediated by E3 ligase TRIM47 and leads to proteasomal degradation.

It localises to the cytoplasm. Its subcellular location is the perinuclear region. It is found in the cytoskeleton. The protein localises to the cell membrane. The protein resides in the microtubule organizing center. It localises to the centrosome. Its subcellular location is the spindle. It is found in the cilium basal body. The catalysed reaction is Thiol-dependent hydrolysis of ester, thioester, amide, peptide and isopeptide bonds formed by the C-terminal Gly of ubiquitin (a 76-residue protein attached to proteins as an intracellular targeting signal).. Its function is as follows. Deubiquitinase that specifically cleaves 'Lys-63'- and linear 'Met-1'-linked polyubiquitin chains and is involved in NF-kappa-B activation and TNF-alpha-induced necroptosis. Negatively regulates NF-kappa-B activation by deubiquitinating upstream signaling factors. Contributes to the regulation of cell survival, proliferation and differentiation via its effects on NF-kappa-B activation. Negative regulator of Wnt signaling. Inhibits HDAC6 and thereby promotes acetylation of alpha-tubulin and stabilization of microtubules. Plays a role in the regulation of microtubule dynamics, and thereby contributes to the regulation of cell proliferation, cell polarization, cell migration, and angiogenesis. Required for normal cell cycle progress and normal cytokinesis. Inhibits nuclear translocation of NF-kappa-B. Plays a role in the regulation of inflammation and the innate immune response, via its effects on NF-kappa-B activation. Dispensable for the maturation of intrathymic natural killer cells, but required for the continued survival of immature natural killer cells. Negatively regulates TNFRSF11A signaling and osteoclastogenesis. Involved in the regulation of ciliogenesis, allowing ciliary basal bodies to migrate and dock to the plasma membrane; this process does not depend on NF-kappa-B activation. Ability to remove linear ('Met-1'-linked) polyubiquitin chains regulates innate immunity and TNF-alpha-induced necroptosis: recruited to the LUBAC complex via interaction with SPATA2 and restricts linear polyubiquitin formation on target proteins. Regulates innate immunity by restricting linear polyubiquitin formation on RIPK2 in response to NOD2 stimulation. Involved in TNF-alpha-induced necroptosis by removing linear ('Met-1'-linked) polyubiquitin chains from RIPK1, thereby regulating the kinase activity of RIPK1. Negatively regulates intestinal inflammation by removing 'Lys-63' linked polyubiquitin chain of NLRP6, thereby reducing the interaction between NLRP6 and PYCARD/ASC and formation of the NLRP6 inflammasome. Does not catalyze deubiquitination of heterotypic 'Lys-63'-/'Lys-48'-linked branched ubiquitin chains. Removes 'Lys-63' linked polyubiquitin chain of MAP3K7, which inhibits phosphorylation and blocks downstream activation of the JNK-p38 kinase cascades. Also removes 'Lys-63'-linked polyubiquitin chains of MAP3K1 and MA3P3K3, which inhibit their interaction with MAP2K1 and MAP2K2. This Pongo abelii (Sumatran orangutan) protein is Ubiquitin carboxyl-terminal hydrolase CYLD (CYLD).